A 227-amino-acid polypeptide reads, in one-letter code: Phosphoribosylformylglycinamidine synthase subunit PurQ (227 aa).

One can recognise a Glutamine amidotransferase type-1 domain in the interval 3–225 (FAVIVFPGSN…VKQGAHHVKT (223 aa)). Catalysis depends on C86, which acts as the Nucleophile. Active-site residues include H194 and E196.

Part of the FGAM synthase complex composed of 1 PurL, 1 PurQ and 2 PurS subunits.

Its subcellular location is the cytoplasm. It carries out the reaction N(2)-formyl-N(1)-(5-phospho-beta-D-ribosyl)glycinamide + L-glutamine + ATP + H2O = 2-formamido-N(1)-(5-O-phospho-beta-D-ribosyl)acetamidine + L-glutamate + ADP + phosphate + H(+). The catalysed reaction is L-glutamine + H2O = L-glutamate + NH4(+). It functions in the pathway purine metabolism; IMP biosynthesis via de novo pathway; 5-amino-1-(5-phospho-D-ribosyl)imidazole from N(2)-formyl-N(1)-(5-phospho-D-ribosyl)glycinamide: step 1/2. In terms of biological role, part of the phosphoribosylformylglycinamidine synthase complex involved in the purines biosynthetic pathway. Catalyzes the ATP-dependent conversion of formylglycinamide ribonucleotide (FGAR) and glutamine to yield formylglycinamidine ribonucleotide (FGAM) and glutamate. The FGAM synthase complex is composed of three subunits. PurQ produces an ammonia molecule by converting glutamine to glutamate. PurL transfers the ammonia molecule to FGAR to form FGAM in an ATP-dependent manner. PurS interacts with PurQ and PurL and is thought to assist in the transfer of the ammonia molecule from PurQ to PurL. This is Phosphoribosylformylglycinamidine synthase subunit PurQ from Exiguobacterium sibiricum (strain DSM 17290 / CCUG 55495 / CIP 109462 / JCM 13490 / 255-15).